Here is a 43-residue protein sequence, read N- to C-terminus: Protein PsbN (43 aa).

The chain crosses the membrane as a helical span at residues 5-27 (TLIAIFISCSLVSFTGYALYTAF).

Belongs to the PsbN family.

The protein resides in the plastid. The protein localises to the chloroplast thylakoid membrane. Its function is as follows. May play a role in photosystem I and II biogenesis. In Lopidium concinnum (Moss), this protein is Protein PsbN.